The chain runs to 133 residues: Small ribosomal subunit protein bS16 (133 aa).

The segment at 99 to 133 is disordered; the sequence is EKWQQNQTERRQKRLAVKTRRRQAKKAAEAKGAEA. Over residues 109-123 the composition is skewed to basic residues; the sequence is RQKRLAVKTRRRQAK. A compositionally biased stretch (basic and acidic residues) spans 124–133; it reads KAAEAKGAEA.

Belongs to the bacterial ribosomal protein bS16 family.

This chain is Small ribosomal subunit protein bS16, found in Chlorobium limicola (strain DSM 245 / NBRC 103803 / 6330).